The chain runs to 353 residues: Photosystem II protein D1 (353 aa).

Residue Thr2 is modified to N-acetylthreonine. Thr2 is subject to Phosphothreonine. Transmembrane regions (helical) follow at residues 29–46 (YIGWFGVLMIPTLLTATS), 118–133 (HFLLGVACYMGREWEL), and 142–156 (WIVVAYSAPVAAATA). His118 contacts chlorophyll a. Residue Tyr126 participates in pheophytin a binding. [CaMn4O5] cluster contacts are provided by Asp170 and Glu189. The helical transmembrane segment at 197-218 (FHMLGVAGVFGGSLFSAMHGSL) threads the bilayer. Residue His198 coordinates chlorophyll a. Residues His215 and 264–265 (SF) contribute to the a quinone site. His215 contacts Fe cation. Position 272 (His272) interacts with Fe cation. Residues 274–288 (FLAAWPVVGIWFTAL) traverse the membrane as a helical segment. [CaMn4O5] cluster-binding residues include His332, Glu333, Asp342, and Ala344. Positions 345 to 353 (AVDAPSISG) are excised as a propeptide.

This sequence belongs to the reaction center PufL/M/PsbA/D family. PSII is composed of 1 copy each of membrane proteins PsbA, PsbB, PsbC, PsbD, PsbE, PsbF, PsbH, PsbI, PsbJ, PsbK, PsbL, PsbM, PsbT, PsbX, PsbY, PsbZ, Psb30/Ycf12, at least 3 peripheral proteins of the oxygen-evolving complex and a large number of cofactors. It forms dimeric complexes. The D1/D2 heterodimer binds P680, chlorophylls that are the primary electron donor of PSII, and subsequent electron acceptors. It shares a non-heme iron and each subunit binds pheophytin, quinone, additional chlorophylls, carotenoids and lipids. D1 provides most of the ligands for the Mn4-Ca-O5 cluster of the oxygen-evolving complex (OEC). There is also a Cl(-1) ion associated with D1 and D2, which is required for oxygen evolution. The PSII complex binds additional chlorophylls, carotenoids and specific lipids. is required as a cofactor. Tyr-161 forms a radical intermediate that is referred to as redox-active TyrZ, YZ or Y-Z. In terms of processing, C-terminally processed by CTPA; processing is essential to allow assembly of the oxygen-evolving complex and thus photosynthetic growth.

The protein localises to the plastid. Its subcellular location is the chloroplast thylakoid membrane. It carries out the reaction 2 a plastoquinone + 4 hnu + 2 H2O = 2 a plastoquinol + O2. Photosystem II (PSII) is a light-driven water:plastoquinone oxidoreductase that uses light energy to abstract electrons from H(2)O, generating O(2) and a proton gradient subsequently used for ATP formation. It consists of a core antenna complex that captures photons, and an electron transfer chain that converts photonic excitation into a charge separation. The D1/D2 (PsbA/PsbD) reaction center heterodimer binds P680, the primary electron donor of PSII as well as several subsequent electron acceptors. This chain is Photosystem II protein D1, found in Vicia faba (Broad bean).